The following is an 848-amino-acid chain: MPFGNDPPDYVHLRSNESQMQLITISENSDIPTPSGSPCFNAPARDEAPSVIFIPGKKFQGTFRWWKSRTTMEKLLLPVLLLFCLLTAVLLAVIINTDKRIEAMKTDHATQTEHAGFGDPTENPTKTAEDPRVPPIVPEAPTSPEPEVTTSTEKPKEPEVCSTPGCVRAATHFLNAMNTSVDPCDDFFEFACGQWNDQHPIPDDMYGFGTFAYAREQVRQQLRVLLEQEVVTESESINMARATYRSCMNKTQLDELMTGPLFETLTELGEWPLLQENWDKTKFNFTSLLVNSRRDYGVDVFFQLYIYADSKNTSRNTLFIDQSTLALGRGTRDYYLNTTLFSSHMTAYRKYLRQIAHLLKTDGNLTRSESEMNADIEKIIDFEIELAKIIVAEDERRNNTRLYNKRQIQDLYNLLPQVDWVPFFQSIAPSDLTHLFHNETEIIICEIEYLQHVSELIEKTDVGLLTNYVLWRVVQSNVRYLDERFEDIKQDFLKVMTGQQQSPPRWKDCAQVPSTVLPLAAGAIYVQAHFQESDKHEALRMIMHLRNSFADLVRQNDWMDEETKAVAIEKANSMINNIGYPDVTNDLPKLDKQYLGLSISDSDTYYYIMKKSVVWMQSREFQKLTKPFDKHEFDISPAVVNAFYSPEKNAITFPAGILQPPFFSGTFPKAVNYGAIGAVIGHEITHGFDDQGSQYDKDGNLHNWWSESSLNSFDTRRRCIVEQYGNYTVPKTNFRVNGKLTQGENIADNGGVKEAFQAYQKYVTENGEEPRLPGLQQYTNEQIFFVSYAHFWCGKKKEAAAMQQVLTDEHSPEVFRVIGVLSNMQAFADVYKCPRNAPVNPDHKCIVW.

At methionine 1–lysine 74 the chain is on the cytoplasmic side. Residues leucine 75–isoleucine 95 traverse the membrane as a helical; Signal-anchor for type II membrane protein segment. Residues asparagine 96–tryptophan 848 lie on the Extracellular side of the membrane. Positions histidine 108–cysteine 161 are disordered. A compositionally biased stretch (pro residues) spans valine 133–proline 144. The 689-residue stretch at valine 160–tryptophan 848 folds into the Peptidase M13 domain. A disulfide bridge links cysteine 161 with cysteine 166. N-linked (GlcNAc...) asparagine glycans are attached at residues asparagine 178, asparagine 249, asparagine 284, asparagine 312, asparagine 337, asparagine 364, asparagine 398, and asparagine 438. Disulfide bonds link cysteine 184/cysteine 833, cysteine 192/cysteine 793, cysteine 247/cysteine 509, and cysteine 719/cysteine 845. Position 682 (histidine 682) interacts with Zn(2+). Glutamate 683 is an active-site residue. Residue histidine 686 coordinates Zn(2+). A glycan (N-linked (GlcNAc...) asparagine) is linked at asparagine 726. Glutamate 744 lines the Zn(2+) pocket. Aspartate 748 functions as the Proton donor in the catalytic mechanism.

It belongs to the peptidase M13 family. Requires Zn(2+) as cofactor.

The protein resides in the cell membrane. In terms of biological role, probable cell surface protease. The sequence is that of Neprilysin-11 (nep-11) from Caenorhabditis elegans.